The following is a 607-amino-acid chain: Frizzled and smoothened-like protein J (607 aa).

An N-terminal signal peptide occupies residues 1 to 26 (MVSNKNLLPIIYIFFIILYFGDVAKS). Residues 27-247 (QYFPLDKGAT…QWRNIYRLSD (221 aa)) are Extracellular-facing. One can recognise an FZ domain in the interval 32-182 (DKGATCQKYR…LSYTNTCENT (151 aa)). Cystine bridges form between cysteine 37-cysteine 108, cysteine 50-cysteine 101, and cysteine 127-cysteine 179. Residues asparagine 63, asparagine 133, asparagine 155, asparagine 164, asparagine 190, and asparagine 222 are each glycosylated (N-linked (GlcNAc...) asparagine). A helical transmembrane segment spans residues 248–268 (VLSILSCILTLFLVITLGIIN). The Cytoplasmic segment spans residues 269-276 (PKVSRFDK). A helical membrane pass occupies residues 277–297 (INVMLLSSIFLQAFSGALMTF). Asparagine 298 carries N-linked (GlcNAc...) asparagine glycosylation. Topologically, residues 298–330 (NGTENTLCPEDGRFASYIDRMCVATGFLLHGSS) are extracellular. Residues 331–351 (LLVVQWWCVLSFEVWFTIFQV) form a helical membrane-spanning segment. The Cytoplasmic portion of the chain corresponds to 352–358 (GKKQKDR). A helical membrane pass occupies residues 359 to 379 (FIYYLVASLIIAWIPPIVSIS). Topologically, residues 380 to 401 (KNEYSGGPANPFCWLTTFNYRR) are extracellular. A helical transmembrane segment spans residues 402–422 (FAFWLPMGIFLCLGGVFLILL). Over 423–451 (MREIYVIVSGNVQSTKESRFKVLKMEAKP) the chain is Cytoplasmic. The chain crosses the membrane as a helical span at residues 452 to 472 (IISLIMYFSCLLYLFIYDQWI). The Extracellular segment spans residues 473–508 (NNHMHVYTDSIPSYALCLLTSTSTNDCLLKAPDITG). A helical transmembrane segment spans residues 509 to 529 (LGYFIYSIRVFGVYAFIIYGI). The Cytoplasmic segment spans residues 530-607 (SKKTLQIWKY…VELDSNSDAL (78 aa)). The Lys-Thr-X-X-X-Trp motif, mediates interaction with the PDZ domain of Dvl family members motif lies at 532–537 (KTLQIW). Residues 559–575 (TAKSSNSNNSSTTNNIS) show a composition bias toward low complexity. Residues 559–607 (TAKSSNSNNSSTTNNISVKASSNMEYETRQENENGDSQSVELDSNSDAL) form a disordered region. Residues 593-607 (GDSQSVELDSNSDAL) are compositionally biased toward polar residues.

This sequence belongs to the G-protein coupled receptor Fz/Smo family.

The protein localises to the membrane. This is Frizzled and smoothened-like protein J (fslJ-1) from Dictyostelium discoideum (Social amoeba).